The sequence spans 392 residues: MQLRKLLLPGLLSVTLLSGCSLFNSEEDVVKMSPLPTVENQFTPTTAWSTSVGSGIGNFYSNLHPALADNVVYAADRAGLVKALNADDGKEIWSVSLAEKDGWFSKEPALLSGGVTVSGGHVYIGSEKAQVYALNTSDGTVAWQTKVAGEALSRPVVSDGLVLIHTSNGQLQALNEADGAVKWTVNLDMPSLSLRGESAPATAFGAAVVGGDNGRVSAVLMEQGQMIWQQRISQATGSTEIDRLSDVDTTPVVVNGVVFALAYNGNLTALDLRSGQIMWKRELGSVNDFIVDGNRIYLVDQNDRVMALTIDGGVTLWTQSDLLHRLLTSPVLYNGNLVVGDSEGYLHWINVEDGRFVAQQKVDSSGFQTEPVAADGKLLIQAKDGTVYSITR.

The first 19 residues, 1 to 19 (MQLRKLLLPGLLSVTLLSG), serve as a signal peptide directing secretion. The N-palmitoyl cysteine moiety is linked to residue Cys20. Cys20 carries S-diacylglycerol cysteine lipidation.

It belongs to the BamB family. Part of the Bam complex, which is composed of the outer membrane protein BamA, and four lipoproteins BamB, BamC, BamD and BamE.

Its subcellular location is the cell outer membrane. In terms of biological role, part of the outer membrane protein assembly complex, which is involved in assembly and insertion of beta-barrel proteins into the outer membrane. The protein is Outer membrane protein assembly factor BamB of Shigella dysenteriae serotype 1 (strain Sd197).